A 186-amino-acid chain; its full sequence is Dynactin subunit 3 (186 aa).

N-acetylalanine is present on Ala2. The stretch at 135 to 157 forms a coiled coil; it reads QQQDQCVEITEESKALLEEYNKT.

It belongs to the dynactin subunit 3 family. Subunit of dynactin, a multiprotein complex part of a tripartite complex with dynein and a adapter, such as BICDL1, BICD2 or HOOK3. The dynactin complex is built around ACTR1A/ACTB filament and consists of an actin-related filament composed of a shoulder domain, a pointed end and a barbed end. Its length is defined by its flexible shoulder domain. The soulder is composed of 2 DCTN1 subunits, 4 DCTN2 and 2 DCTN3. The 4 DCNT2 (via N-terminus) bind the ACTR1A filament and act as molecular rulers to determine the length. The pointed end is important for binding dynein-dynactin cargo adapters. Consists of 4 subunits: ACTR10, DCNT4, DCTN5 and DCTN6. The barbed end is composed of a CAPZA1:CAPZB heterodimers, which binds ACTR1A/ACTB filament and dynactin and stabilizes dynactin. As to expression, ubiquitously expressed. Highly expressed in muscle and pancreas and detected at lower levels in brain.

It is found in the cytoplasm. It localises to the cytoskeleton. Its subcellular location is the microtubule organizing center. The protein localises to the centrosome. The protein resides in the chromosome. It is found in the centromere. It localises to the kinetochore. Its subcellular location is the spindle. The protein localises to the cleavage furrow. The protein resides in the midbody. Its function is as follows. Part of the dynactin complex that activates the molecular motor dynein for ultra-processive transport along microtubules. Together with dynein may be involved in spindle assembly and cytokinesis. In Homo sapiens (Human), this protein is Dynactin subunit 3.